Consider the following 102-residue polypeptide: Large ribosomal subunit protein bL21 (102 aa).

This sequence belongs to the bacterial ribosomal protein bL21 family. In terms of assembly, part of the 50S ribosomal subunit. Contacts protein L20.

Its function is as follows. This protein binds to 23S rRNA in the presence of protein L20. The chain is Large ribosomal subunit protein bL21 from Nitratidesulfovibrio vulgaris (strain DSM 19637 / Miyazaki F) (Desulfovibrio vulgaris).